A 407-amino-acid chain; its full sequence is Putative glycosyltransferase YtcC (407 aa).

Belongs to the glycosyltransferase group 1 family. Glycosyltransferase 4 subfamily.

In Bacillus subtilis (strain 168), this protein is Putative glycosyltransferase YtcC (ytcC).